The chain runs to 407 residues: Putative membrane protein 047R (407 aa).

The segment at 265-337 is disordered; the sequence is INCVFKPDPP…PPKPTPPPPI (73 aa). A compositionally biased stretch (pro residues) spans 271-337; sequence PDPPPQPKPQ…PPKPTPPPPI (67 aa). Transmembrane regions (helical) follow at residues 355-372 and 385-403; these read NWIM…VIYP and NAAI…QSYV.

The protein belongs to the IIV-6 337L family.

It localises to the virion membrane. The chain is Putative membrane protein 047R from Aedes vexans (Inland floodwater mosquito).